We begin with the raw amino-acid sequence, 349 residues long: Hydroxymethylglutaryl-CoA synthase (349 aa).

(3S)-3-hydroxy-3-methylglutaryl-CoA contacts are provided by Asp29 and Ala30. Glu81 (proton donor/acceptor) is an active-site residue. (3S)-3-hydroxy-3-methylglutaryl-CoA contacts are provided by Cys113 and Thr154. Residue Cys113 is the Acyl-thioester intermediate of the active site. Arg202 is a binding site for CoA. Residues Thr204 and His237 each contribute to the (3S)-3-hydroxy-3-methylglutaryl-CoA site. Catalysis depends on His237, which acts as the Proton donor/acceptor. Lys242 serves as a coordination point for CoA. 3 residues coordinate (3S)-3-hydroxy-3-methylglutaryl-CoA: Arg246, Asn269, and Ser299.

It belongs to the thiolase-like superfamily. Archaeal HMG-CoA synthase family. In terms of assembly, interacts with acetoacetyl-CoA thiolase that catalyzes the precedent step in the pathway and with a DUF35 protein. The acetoacetyl-CoA thiolase/HMG-CoA synthase complex channels the intermediate via a fused CoA-binding site, which allows for efficient coupling of the endergonic thiolase reaction with the exergonic HMGCS reaction.

It catalyses the reaction acetoacetyl-CoA + acetyl-CoA + H2O = (3S)-3-hydroxy-3-methylglutaryl-CoA + CoA + H(+). It participates in metabolic intermediate biosynthesis; (R)-mevalonate biosynthesis; (R)-mevalonate from acetyl-CoA: step 2/3. Catalyzes the condensation of acetyl-CoA with acetoacetyl-CoA to form 3-hydroxy-3-methylglutaryl-CoA (HMG-CoA). Functions in the mevalonate (MVA) pathway leading to isopentenyl diphosphate (IPP), a key precursor for the biosynthesis of isoprenoid compounds that are building blocks of archaeal membrane lipids. This Methanococcoides burtonii (strain DSM 6242 / NBRC 107633 / OCM 468 / ACE-M) protein is Hydroxymethylglutaryl-CoA synthase.